Reading from the N-terminus, the 363-residue chain is 3-isopropylmalate dehydrogenase (363 aa).

NAD(+) is bound at residue 78-91 (GPKWENLPPESQPE). The substrate site is built by R99, R109, R138, and D227. Mg(2+) contacts are provided by D227, D251, and D255. 285–297 (GSAPDIAGKNIAN) contributes to the NAD(+) binding site.

Belongs to the isocitrate and isopropylmalate dehydrogenases family. LeuB type 1 subfamily. As to quaternary structure, homodimer. The cofactor is Mg(2+). Mn(2+) serves as cofactor.

It is found in the cytoplasm. The enzyme catalyses (2R,3S)-3-isopropylmalate + NAD(+) = 4-methyl-2-oxopentanoate + CO2 + NADH. It functions in the pathway amino-acid biosynthesis; L-leucine biosynthesis; L-leucine from 3-methyl-2-oxobutanoate: step 3/4. Its function is as follows. Catalyzes the oxidation of 3-carboxy-2-hydroxy-4-methylpentanoate (3-isopropylmalate) to 3-carboxy-4-methyl-2-oxopentanoate. The product decarboxylates to 4-methyl-2 oxopentanoate. The sequence is that of 3-isopropylmalate dehydrogenase from Salmonella choleraesuis (strain SC-B67).